The primary structure comprises 138 residues: Small ribosomal subunit protein uS9 (138 aa).

Residues 99 to 138 are disordered; the sequence is DPDNRPPLKTEGYLTRDPRAKERKKYGLHKARKAPQYSKR. Residues 100–118 show a composition bias toward basic and acidic residues; the sequence is PDNRPPLKTEGYLTRDPRA. A compositionally biased stretch (basic residues) spans 119 to 138; sequence KERKKYGLHKARKAPQYSKR.

This sequence belongs to the universal ribosomal protein uS9 family.

The polypeptide is Small ribosomal subunit protein uS9 (Nostoc punctiforme (strain ATCC 29133 / PCC 73102)).